Consider the following 395-residue polypeptide: Ketoisovalerate oxidoreductase subunit VorA (395 aa).

In terms of assembly, heterotetramer of one alpha, one beta, one delta and one gamma chain.

It carries out the reaction 3-methyl-2-oxobutanoate + 2 oxidized [2Fe-2S]-[ferredoxin] + CoA = 2-methylpropanoyl-CoA + 2 reduced [2Fe-2S]-[ferredoxin] + CO2 + H(+). This chain is Ketoisovalerate oxidoreductase subunit VorA (vorA), found in Pyrococcus abyssi (strain GE5 / Orsay).